We begin with the raw amino-acid sequence, 200 residues long: Probable nicotinate-nucleotide adenylyltransferase (200 aa).

This sequence belongs to the NadD family.

It catalyses the reaction nicotinate beta-D-ribonucleotide + ATP + H(+) = deamido-NAD(+) + diphosphate. The protein operates within cofactor biosynthesis; NAD(+) biosynthesis; deamido-NAD(+) from nicotinate D-ribonucleotide: step 1/1. In terms of biological role, catalyzes the reversible adenylation of nicotinate mononucleotide (NaMN) to nicotinic acid adenine dinucleotide (NaAD). The polypeptide is Probable nicotinate-nucleotide adenylyltransferase (Clostridium botulinum (strain Eklund 17B / Type B)).